The chain runs to 309 residues: MPEKDEKEQHMRKPDWLKIKLNTNESYTGLKKMMREKKLHTVCEEARCPNIHECWAVRKTATFMILGDICTRGCRFCAVKTGLPTELDLQEPERVAESVETMGLKHVVITAVARDDLKDGGAAVFAETVRAVRRKNPFCTIEVLPSDMLGNESSLQTLMDARPNIMNHNIETVRRLTPKVRARAKYDRTLEFLRRAKEMHPDIPTKSSLMVGLGETKEEILETMDDLRANNVDILTIGQYLQPTKKHLKVIKYYHPDEFAELKEIAMQKGFSHCEAGPLVRSSYHADEQVNQAQVNMEARKAQGEQQRV.

Cys-43, Cys-48, Cys-54, Cys-70, Cys-74, Cys-77, and Ser-283 together coordinate [4Fe-4S] cluster. In terms of domain architecture, Radical SAM core spans 56 to 272; it reads AVRKTATFMI…KEIAMQKGFS (217 aa).

Belongs to the radical SAM superfamily. Lipoyl synthase family. The cofactor is [4Fe-4S] cluster.

It is found in the cytoplasm. It catalyses the reaction [[Fe-S] cluster scaffold protein carrying a second [4Fe-4S](2+) cluster] + N(6)-octanoyl-L-lysyl-[protein] + 2 oxidized [2Fe-2S]-[ferredoxin] + 2 S-adenosyl-L-methionine + 4 H(+) = [[Fe-S] cluster scaffold protein] + N(6)-[(R)-dihydrolipoyl]-L-lysyl-[protein] + 4 Fe(3+) + 2 hydrogen sulfide + 2 5'-deoxyadenosine + 2 L-methionine + 2 reduced [2Fe-2S]-[ferredoxin]. It functions in the pathway protein modification; protein lipoylation via endogenous pathway; protein N(6)-(lipoyl)lysine from octanoyl-[acyl-carrier-protein]. Its function is as follows. Catalyzes the radical-mediated insertion of two sulfur atoms into the C-6 and C-8 positions of the octanoyl moiety bound to the lipoyl domains of lipoate-dependent enzymes, thereby converting the octanoylated domains into lipoylated derivatives. In Shouchella clausii (strain KSM-K16) (Alkalihalobacillus clausii), this protein is Lipoyl synthase.